Reading from the N-terminus, the 668-residue chain is UvrABC system protein B (668 aa).

A Helicase ATP-binding domain is found at 25–170 (NSILLGNKYQ…FVGQKISIKE (146 aa)). Residue 38 to 45 (GVTGSGKT) participates in ATP binding. Residues 91–114 (YYDYYQPESYVPSKDLFIEKEATI) carry the Beta-hairpin motif. Positions 429-595 (QMEDLYSEIQ…TIVKKIQNIL (167 aa)) constitute a Helicase C-terminal domain. A UVR domain is found at 622 to 657 (KKLIDKLKFDLEEAVNDERFEDAIVLRDKIKELSSK).

The protein belongs to the UvrB family. As to quaternary structure, forms a heterotetramer with UvrA during the search for lesions. Interacts with UvrC in an incision complex.

The protein localises to the cytoplasm. Its function is as follows. The UvrABC repair system catalyzes the recognition and processing of DNA lesions. A damage recognition complex composed of 2 UvrA and 2 UvrB subunits scans DNA for abnormalities. Upon binding of the UvrA(2)B(2) complex to a putative damaged site, the DNA wraps around one UvrB monomer. DNA wrap is dependent on ATP binding by UvrB and probably causes local melting of the DNA helix, facilitating insertion of UvrB beta-hairpin between the DNA strands. Then UvrB probes one DNA strand for the presence of a lesion. If a lesion is found the UvrA subunits dissociate and the UvrB-DNA preincision complex is formed. This complex is subsequently bound by UvrC and the second UvrB is released. If no lesion is found, the DNA wraps around the other UvrB subunit that will check the other stand for damage. The polypeptide is UvrABC system protein B (Borreliella burgdorferi (strain ZS7) (Borrelia burgdorferi)).